A 465-amino-acid polypeptide reads, in one-letter code: Monogalactosyldiacylglycerol synthase 3, chloroplastic (465 aa).

UDP contacts are provided by residues His-86, Arg-255, Gly-365–Glu-369, and Glu-387.

The protein belongs to the glycosyltransferase 28 family. Expressed mainly in roots. Detected in flowers, leaves, stems, siliques and pollen tubes.

The protein resides in the plastid. It is found in the chloroplast outer membrane. It catalyses the reaction a 1,2-diacyl-sn-glycerol + UDP-alpha-D-galactose = a 1,2-diacyl-3-O-(beta-D-galactosyl)-sn-glycerol + UDP + H(+). The enzyme catalyses 1,2-di-(9Z,12Z-octadecadienoyl)-sn-glycerol + UDP-alpha-D-galactose = 1,2-di-(9Z,12Z-octadecadienoyl)-3-beta-D-galactosyl-sn-glycerol + UDP + H(+). The catalysed reaction is 1-(9Z-octadecenoyl)-2-hexadecanoyl-sn-glycerol + UDP-alpha-D-galactose = 1-(9Z-octadecenoyl)-2-hexadecanoyl-3-beta-D-galactosyl-sn-glycerol + UDP + H(+). It carries out the reaction 1,2-di-(9Z-octadecenoyl)-sn-glycerol + UDP-alpha-D-galactose = 1,2-di-(9Z-octadecenoyl)-3-beta-D-galactosyl-sn-glycerol + UDP + H(+). Its activity is regulated as follows. Inhibited by galvestine-1. Its function is as follows. Involved in the synthesis of monogalactosyldiacylglycerol, the major structural component of photosynthetic membranes and in the chloroplast envelope biogenesis. Can use both prokaryotic (18:1/16:0) or eukaryotic (18:2/18:2) 1,2-diacylglycerol species, but operates with some preference for the eukaryotic one. Plays a minor role in galactolipid synthesis in chloroplasts. Is essential for membrane lipid remodeling in phosphate-starved roots. Acts as the major factor involved in digalactosyldiacylglycerol (DGDG) biosynthesis in phosphate-starved roots. Does not seem to be required for plant growth under nutrient-sufficient conditions. Required for membrane lipid remodeling in plants grown in acidic conditions. The chain is Monogalactosyldiacylglycerol synthase 3, chloroplastic from Arabidopsis thaliana (Mouse-ear cress).